The primary structure comprises 282 residues: Glycine betaine transport system permease protein OpuAB (282 aa).

The Extracellular portion of the chain corresponds to 1-18; the sequence is MDRLPRIPLADIIDRFVD. Residues 19-39 form a helical membrane-spanning segment; sequence WITMTFGGFFDGIANGLAAFV. Residues 40–44 are Cytoplasmic-facing; the sequence is NGIVT. The chain crosses the membrane as a helical span at residues 45 to 65; sequence GLGFIPSILLTIIFAALAWWI. Topologically, residues 66-69 are extracellular; sequence STRG. Residues 70 to 90 form a helical membrane-spanning segment; it reads IALFTLIGFLLIDYLGYWDPM. Residues 90 to 269 enclose the ABC transmembrane type-1 domain; sequence MLQTLALVLT…IVAITLDRIT (180 aa). Topologically, residues 91 to 93 are cytoplasmic; the sequence is LQT. Residues 94–114 form a helical membrane-spanning segment; it reads LALVLTSVIISIVVGVPIGIW. The Extracellular segment spans residues 115-137; it reads ASQKETVRRIVTPILDLMQTMPA. Residues 138-158 form a helical membrane-spanning segment; it reads FVYLLPAIFFFNIGVVPGVVA. At 159–215 the chain is on the cytoplasmic side; the sequence is SVIFAMPPTIRMTVLGIKQVPADLIEATEAFGSTTAQRLFKVQLPLATKTILAGINQ. The chain crosses the membrane as a helical span at residues 216-236; it reads SIMLALSMVVIAAMVGAPGLG. Residues 237–242 are Extracellular-facing; that stretch reads SEVYSA. The chain crosses the membrane as a helical span at residues 243–263; the sequence is VTQLKTGVGVEAGIAIVIVAI. At 264–282 the chain is on the cytoplasmic side; it reads TLDRITQNIKVKKKSRGNA.

Belongs to the binding-protein-dependent transport system permease family. CysTW subfamily. The complex is composed of two ATP-binding proteins (OpuAA), two transmembrane proteins (OpuAB) and a solute-binding protein (OpuAC).

The protein resides in the cell membrane. Its function is as follows. Involved in a multicomponent binding-protein-dependent transport system for glycine betaine; probably responsible for the translocation of the substrate across the membrane. The polypeptide is Glycine betaine transport system permease protein OpuAB (opuAB) (Bacillus subtilis (strain 168)).